The following is a 363-amino-acid chain: Lipoyl synthase (363 aa).

7 residues coordinate [4Fe-4S] cluster: C55, C60, C66, C81, C85, C88, and S292. Residues W67–G281 enclose the Radical SAM core domain. Residues P338–R363 are disordered. Polar residues predominate over residues P352–R363.

The protein belongs to the radical SAM superfamily. Lipoyl synthase family. [4Fe-4S] cluster is required as a cofactor.

It localises to the cytoplasm. It carries out the reaction [[Fe-S] cluster scaffold protein carrying a second [4Fe-4S](2+) cluster] + N(6)-octanoyl-L-lysyl-[protein] + 2 oxidized [2Fe-2S]-[ferredoxin] + 2 S-adenosyl-L-methionine + 4 H(+) = [[Fe-S] cluster scaffold protein] + N(6)-[(R)-dihydrolipoyl]-L-lysyl-[protein] + 4 Fe(3+) + 2 hydrogen sulfide + 2 5'-deoxyadenosine + 2 L-methionine + 2 reduced [2Fe-2S]-[ferredoxin]. Its pathway is protein modification; protein lipoylation via endogenous pathway; protein N(6)-(lipoyl)lysine from octanoyl-[acyl-carrier-protein]: step 2/2. Functionally, catalyzes the radical-mediated insertion of two sulfur atoms into the C-6 and C-8 positions of the octanoyl moiety bound to the lipoyl domains of lipoate-dependent enzymes, thereby converting the octanoylated domains into lipoylated derivatives. The polypeptide is Lipoyl synthase (Corynebacterium aurimucosum (strain ATCC 700975 / DSM 44827 / CIP 107346 / CN-1) (Corynebacterium nigricans)).